The primary structure comprises 616 residues: Glycogenin-1 (616 aa).

3 residues coordinate UDP: L10, Y16, and R95. Residues L10, Y16, R95, K104, D120, D122, N158, S159, D185, D188, and Q189 each contribute to the UDP-alpha-D-glucose site. The UDP site is built by D120 and D122. Positions 120 and 122 each coordinate Mn(2+). Y230 carries O-linked (Glc...) tyrosine glycosylation. Positions 247, 250, and 253 each coordinate UDP. H247 provides a ligand contact to Mn(2+). Positions 250 and 253 each coordinate UDP-alpha-D-glucose. Over residues 283–302 the composition is skewed to basic and acidic residues; the sequence is HQLNNEVSKPKISDSDKTET. Disordered regions lie at residues 283 to 320, 335 to 354, and 371 to 516; these read HQLNNEVSKPKISDSDKTETPETITPVDAPPSNEPTTN, NQNAEPVPNSDHSPAPNPVP, and TNQP…SVDD. A compositionally biased stretch (basic and acidic residues) spans 377–386; it reads ESREYSKEND. Residues 400 to 419 show a composition bias toward polar residues; sequence SPPNSTQEPNSSYSVVSTQA. The segment covering 450 to 461 has biased composition (low complexity); the sequence is STAASSNNNVSN. Polar residues-rich tracts occupy residues 462 to 485 and 492 to 503; these read QPDNKNFSNSKENNISVEPSPSNP and DNIQKPSVSTND. The O-linked (Glc...) tyrosine glycan is linked to Y598.

Belongs to the glycosyltransferase 8 family. Glycogenin subfamily. Requires Mn(2+) as cofactor.

It is found in the cytoplasm. It localises to the vacuole. It carries out the reaction L-tyrosyl-[glycogenin] + UDP-alpha-D-glucose = alpha-D-glucosyl-L-tyrosyl-[glycogenin] + UDP + H(+). It catalyses the reaction [1,4-alpha-D-glucosyl](n)-L-tyrosyl-[glycogenin] + UDP-alpha-D-glucose = [1,4-alpha-D-glucosyl](n+1)-L-tyrosyl-[glycogenin] + UDP + H(+). In terms of biological role, self-glucosylating initiator of glycogen synthesis. It catalyzes the formation of a short alpha (1,4)-glucosyl chain covalently attached via a glucose 1-O-tyrosyl linkage to internal tyrosine residues and these chains act as primers for the elongation reaction catalyzed by glycogen synthase. Capable of transferring glucosyl residues to unbound acceptors such as free oligoglucans or oligoglucan derivatives. This Saccharomyces cerevisiae (strain YJM789) (Baker's yeast) protein is Glycogenin-1 (GLG1).